Reading from the N-terminus, the 154-residue chain is CASP-like protein 5B2 (154 aa).

Residues 1–17 (MAGLAGRPGSWGGLVLR) are Cytoplasmic-facing. The chain crosses the membrane as a helical span at residues 18–38 (VGQALFAAACIGVMGSSLGFA). Residues 39–42 (SYTA) are Extracellular-facing. Residues 43 to 63 (FCYLIASMGLQMLWSFGLACL) traverse the membrane as a helical segment. Residues 64 to 87 (DGYAIRANKDLTSPILLSLFVVGD) are Cytoplasmic-facing. The chain crosses the membrane as a helical span at residues 88-107 (WVTAILSFAASSSAAGVVIL). Topologically, residues 108-130 (FQKDVLFCRRYPQLPCGKYELAT) are extracellular. Residues 131–151 (AFAFLSWALSATSALIMFWLL) form a helical membrane-spanning segment. Residues 152-154 (AAF) are Cytoplasmic-facing.

The protein belongs to the Casparian strip membrane proteins (CASP) family. As to quaternary structure, homodimer and heterodimers.

Its subcellular location is the cell membrane. The sequence is that of CASP-like protein 5B2 from Zea mays (Maize).